The primary structure comprises 130 residues: Ribonuclease P protein component 2 (130 aa).

The protein belongs to the eukaryotic/archaeal RNase P protein component 2 family. As to quaternary structure, consists of a catalytic RNA component and at least 4-5 protein subunits.

It is found in the cytoplasm. It catalyses the reaction Endonucleolytic cleavage of RNA, removing 5'-extranucleotides from tRNA precursor.. Its function is as follows. Part of ribonuclease P, a protein complex that generates mature tRNA molecules by cleaving their 5'-ends. In Methanococcus vannielii (strain ATCC 35089 / DSM 1224 / JCM 13029 / OCM 148 / SB), this protein is Ribonuclease P protein component 2.